A 567-amino-acid chain; its full sequence is Dihydroxy-acid dehydratase (567 aa).

[2Fe-2S] cluster is bound at residue Cys-57. Asp-89 is a binding site for Mg(2+). Cys-130 is a binding site for [2Fe-2S] cluster. Mg(2+) contacts are provided by Asp-131 and Lys-132. An N6-carboxylysine modification is found at Lys-132. Cys-202 provides a ligand contact to [2Fe-2S] cluster. Position 453 (Glu-453) interacts with Mg(2+). Ser-479 serves as the catalytic Proton acceptor.

The protein belongs to the IlvD/Edd family. Homodimer. [2Fe-2S] cluster serves as cofactor. The cofactor is Mg(2+).

The catalysed reaction is (2R)-2,3-dihydroxy-3-methylbutanoate = 3-methyl-2-oxobutanoate + H2O. The enzyme catalyses (2R,3R)-2,3-dihydroxy-3-methylpentanoate = (S)-3-methyl-2-oxopentanoate + H2O. The protein operates within amino-acid biosynthesis; L-isoleucine biosynthesis; L-isoleucine from 2-oxobutanoate: step 3/4. It functions in the pathway amino-acid biosynthesis; L-valine biosynthesis; L-valine from pyruvate: step 3/4. Functionally, functions in the biosynthesis of branched-chain amino acids. Catalyzes the dehydration of (2R,3R)-2,3-dihydroxy-3-methylpentanoate (2,3-dihydroxy-3-methylvalerate) into 2-oxo-3-methylpentanoate (2-oxo-3-methylvalerate) and of (2R)-2,3-dihydroxy-3-methylbutanoate (2,3-dihydroxyisovalerate) into 2-oxo-3-methylbutanoate (2-oxoisovalerate), the penultimate precursor to L-isoleucine and L-valine, respectively. This is Dihydroxy-acid dehydratase from Nocardioides sp. (strain ATCC BAA-499 / JS614).